Reading from the N-terminus, the 652-residue chain is Acetyl-coenzyme A synthetase (652 aa).

CoA is bound by residues 193–196 (RRGK) and Thr-312. ATP contacts are provided by residues 388 to 390 (GEP), 412 to 417 (DTWWQT), Asp-501, and Arg-516. Position 524 (Ser-524) interacts with CoA. 3 residues coordinate Mg(2+): Val-538, His-540, and Val-543. At Lys-611 the chain carries N6-acetyllysine.

This sequence belongs to the ATP-dependent AMP-binding enzyme family. It depends on Mg(2+) as a cofactor. In terms of processing, acetylated. Deacetylation by the SIR2-homolog deacetylase activates the enzyme.

It carries out the reaction acetate + ATP + CoA = acetyl-CoA + AMP + diphosphate. Its function is as follows. Catalyzes the conversion of acetate into acetyl-CoA (AcCoA), an essential intermediate at the junction of anabolic and catabolic pathways. AcsA undergoes a two-step reaction. In the first half reaction, AcsA combines acetate with ATP to form acetyl-adenylate (AcAMP) intermediate. In the second half reaction, it can then transfer the acetyl group from AcAMP to the sulfhydryl group of CoA, forming the product AcCoA. The polypeptide is Acetyl-coenzyme A synthetase (Streptomyces avermitilis (strain ATCC 31267 / DSM 46492 / JCM 5070 / NBRC 14893 / NCIMB 12804 / NRRL 8165 / MA-4680)).